The chain runs to 132 residues: Small ribosomal subunit protein uS8c (132 aa).

Belongs to the universal ribosomal protein uS8 family. Part of the 30S ribosomal subunit.

It localises to the plastid. The protein localises to the chloroplast. Functionally, one of the primary rRNA binding proteins, it binds directly to 16S rRNA central domain where it helps coordinate assembly of the platform of the 30S subunit. In Marchantia polymorpha (Common liverwort), this protein is Small ribosomal subunit protein uS8c (rps8).